Consider the following 73-residue polypeptide: U3-agatoxin-Ao1e (73 aa).

The N-terminal stretch at 1–20 (MRTIISLLLLSAMVFAVIEA) is a signal peptide. Positions 21–34 (ISLEEGLQLFEGER) are excised as a propeptide. Intrachain disulfides connect C36/C52, C43/C57, C51/C67, and C59/C65. N71 is modified (asparagine amide).

Belongs to the neurotoxin 07 (Beta/delta-agtx) family. 03 (aga-4) subfamily. Aga sub-subfamily. In terms of tissue distribution, expressed by the venom gland.

Its subcellular location is the secreted. Insecticidal neurotoxin that induces an irreversible spastic paralysis when injected into insects. Modifies presynaptic voltage-gated sodium channels (Nav), causing them to open at the normal resting potential of the nerve. This leads to spontaneous release of neurotransmitter and repetitive action potentials in motor neurons. In Agelena orientalis (Funnel-web spider), this protein is U3-agatoxin-Ao1e.